We begin with the raw amino-acid sequence, 256 residues long: MGDKRGLVLDETATYGTVDRLTGWFRNVCIQLPEGTLLVLCCCAVEQRIGVTTFSIGLSYDLLTGLDPSNPDTVQSPWILTLQVDQKEEYPKGLLLRIPTKQTLKDYWIHQLKEACVSRDGNANRVMSLSNANSQKMWDSLVSHDFKTFWSIMTTILPREKDSGAIRSLPIKVYLPMSNQCIAAIVKPETDDGKLTTIGQSLHSHLPTFFPSETKPVVARAVVHGVEVPLNAVLANLYYMAMYPDGFLHISLVMIN.

Lys-113 participates in a covalent cross-link: Glycyl lysine isopeptide (Lys-Gly) (interchain with G-Cter in ATG12).

This sequence belongs to the ATG5 family. As to quaternary structure, conjugated with ATG12. Conjugated to ATG12; which is essential for autophagy.

The protein localises to the preautophagosomal structure membrane. In terms of biological role, involved in cytoplasm to vacuole transport (Cvt) and autophagic vesicle formation. Autophagy is essential for maintenance of amino acid levels and protein synthesis under nitrogen starvation. Required for selective autophagic degradation of the nucleus (nucleophagy). Also required for mitophagy, which eliminates defective or superfluous mitochondria in order to fulfill cellular energy requirements and prevent excess ROS production. Conjugation with ATG12, through a ubiquitin-like conjugating system involving ATG7 as an E1-like activating enzyme and ATG10 as an E2-like conjugating enzyme, is essential for its function. The ATG12-ATG5 conjugate acts as an E3-like enzyme which is required for lipidation of ATG8 and ATG8 association to the vesicle membranes. In Yarrowia lipolytica (strain CLIB 122 / E 150) (Yeast), this protein is Autophagy protein 5 (ATG5).